We begin with the raw amino-acid sequence, 343 residues long: Cytoplasmic tRNA 2-thiolation protein 1 (343 aa).

Belongs to the TtcA family. CTU1/NCS6/ATPBD3 subfamily.

It is found in the cytoplasm. Its pathway is tRNA modification; 5-methoxycarbonylmethyl-2-thiouridine-tRNA biosynthesis. Plays a central role in 2-thiolation of mcm(5)S(2)U at tRNA wobble positions of tRNA(Lys), tRNA(Glu) and tRNA(Gln). Directly binds tRNAs and probably acts by catalyzing adenylation of tRNAs, an intermediate required for 2-thiolation. It is unclear whether it acts as a sulfurtransferase that transfers sulfur from thiocarboxylated URM1 onto the uridine of tRNAs at wobble position. This Drosophila yakuba (Fruit fly) protein is Cytoplasmic tRNA 2-thiolation protein 1.